Consider the following 472-residue polypeptide: NADH-quinone oxidoreductase subunit N (472 aa).

The next 14 helical transmembrane spans lie at 11–31, 43–63, 67–87, 103–123, 125–145, 159–179, 200–220, 234–254, 265–285, 293–313, 318–338, 362–384, 401–421, and 446–466; these read AELSLTAVFILMFLLDLFLPA, ILLTIQLLANLWPEEVTLFGG, STPMASVLKSILTIGTILVFL, GEFYILTLSTLLGMYFMVSAG, FLLFFLGLELATVPMACLVAF, FILSALFSSGIFLYGISMIYG, VLALVFFFSGLAFKLSLVPFH, VSAYLSVISKGAAAFALMIIL, WSEILCIIIVATITIANLFAI, FMAFSSISQAGYIMLAVLAGT, ASLVYYIVVYIAANLAVFGVI, PKLTMVMTLALFSLAGIPPFAGF, LIVFIALVNTIISLYYYLLIV, and LLVCVAGIFVLGIISGVYQLL.

This sequence belongs to the complex I subunit 2 family. As to quaternary structure, NDH-1 is composed of 14 different subunits. Subunits NuoA, H, J, K, L, M, N constitute the membrane sector of the complex.

Its subcellular location is the cell inner membrane. The enzyme catalyses a quinone + NADH + 5 H(+)(in) = a quinol + NAD(+) + 4 H(+)(out). In terms of biological role, NDH-1 shuttles electrons from NADH, via FMN and iron-sulfur (Fe-S) centers, to quinones in the respiratory chain. The immediate electron acceptor for the enzyme in this species is believed to be a menaquinone. Couples the redox reaction to proton translocation (for every two electrons transferred, four hydrogen ions are translocated across the cytoplasmic membrane), and thus conserves the redox energy in a proton gradient. In Phocaeicola vulgatus (strain ATCC 8482 / DSM 1447 / JCM 5826 / CCUG 4940 / NBRC 14291 / NCTC 11154) (Bacteroides vulgatus), this protein is NADH-quinone oxidoreductase subunit N.